A 475-amino-acid chain; its full sequence is Beta-amyrin 28-monooxygenase (475 aa).

Residues 2–22 (YLTILFLFVSSILLSLMFLLR) traverse the membrane as a helical segment. Cysteine 422 contributes to the heme binding site.

The protein belongs to the cytochrome P450 family. Requires heme as cofactor.

It is found in the membrane. It carries out the reaction beta-amyrin + 3 reduced [NADPH--hemoprotein reductase] + 3 O2 = oleanolate + 3 oxidized [NADPH--hemoprotein reductase] + 4 H2O + 4 H(+). Catalyzes the oxidation of the methyl group to a carboxyl group at the C-28 position of beta-amyrin to form oleanolate. This Barbarea vulgaris (Yellow rocket) protein is Beta-amyrin 28-monooxygenase.